Here is a 503-residue protein sequence, read N- to C-terminus: ATP-dependent RNA helicase dbp3 (503 aa).

Residues 1–13 (MGKRVSHNEGADR) are compositionally biased toward basic and acidic residues. A disordered region spans residues 1–37 (MGKRVSHNEGADRRPKKKAKNEKPEKETMESPAADVT). Positions 104 to 112 (SFASPTPIQ) match the Q motif motif. One can recognise a Helicase ATP-binding domain in the interval 116-292 (WPLLFAGRDV…ATFMTSAVTV (177 aa)). 129 to 136 (AETGSGKT) provides a ligand contact to ATP. The DEAD box signature appears at 239–242 (DEAD). The Helicase C-terminal domain maps to 323–472 (RLVQLLSENQ…EVPQELLKFG (150 aa)).

The protein belongs to the DEAD box helicase family. DDX5/DBP2 subfamily.

It is found in the nucleus. It localises to the nucleolus. The catalysed reaction is ATP + H2O = ADP + phosphate + H(+). Its function is as follows. ATP-dependent RNA helicase required for 60S ribosomal subunit synthesis. Involved in efficient pre-rRNA processing, predominantly at site A3, which is necessary for the normal formation of 25S and 5.8S rRNAs. In Aspergillus clavatus (strain ATCC 1007 / CBS 513.65 / DSM 816 / NCTC 3887 / NRRL 1 / QM 1276 / 107), this protein is ATP-dependent RNA helicase dbp3 (dbp3).